Here is a 325-residue protein sequence, read N- to C-terminus: Putative HTH-type transcriptional regulatory protein MK1005 (325 aa).

Residues 128-190 (VDELDVSRVR…FERRVAELLE (63 aa)) enclose the HTH cro/C1-type domain. Residues 139-158 (RQLRREGGRITLARAEEADV) constitute a DNA-binding region (H-T-H motif).

The sequence is that of Putative HTH-type transcriptional regulatory protein MK1005 from Methanopyrus kandleri (strain AV19 / DSM 6324 / JCM 9639 / NBRC 100938).